The chain runs to 88 residues: Small ribosomal subunit protein uS15c (88 aa).

It belongs to the universal ribosomal protein uS15 family. In terms of assembly, part of the 30S ribosomal subunit.

It is found in the plastid. The protein resides in the chloroplast. The sequence is that of Small ribosomal subunit protein uS15c (rps15) from Aethionema cordifolium (Lebanon stonecress).